The primary structure comprises 110 residues: Chorion class B protein M2410 (110 aa).

4 tandem repeats follow at residues 1 to 4 (YGGL), 5 to 9 (GYGGL), 10 to 14 (GYGGL), and 15 to 19 (GYGGL). The 4 X 5 AA tandem repeats of G-Y-G-G-L stretch occupies residues 1–19 (YGGLGYGGLGYGGLGYGGL). The interval 1 to 27 (YGGLGYGGLGYGGLGYGGLGGGCGRGF) is left arm. A central domain region spans residues 28–96 (SGGGLPVATA…GNGDVGITRE (69 aa)). The tract at residues 97-110 (GGLGYGAGYGGGYG) is right arm (Gly-rich tandem repeats).

This sequence belongs to the chorion protein family.

Functionally, this protein is one of many from the eggshell of the silk moth. The chain is Chorion class B protein M2410 from Bombyx mori (Silk moth).